A 399-amino-acid chain; its full sequence is uncharacterized protein (399 aa).

Residues 375-399 (AAGGHRGSHGKSEQAATVRVVDDRR) form a disordered region.

The protein belongs to the mycobacterial PPE family.

This is an uncharacterized protein from Mycobacterium tuberculosis (strain CDC 1551 / Oshkosh).